The following is a 407-amino-acid chain: Probable cysteine protease atg4 (407 aa).

Cys-136 functions as the Nucleophile in the catalytic mechanism. Active-site residues include Asp-310 and His-312.

It belongs to the peptidase C54 family.

It is found in the cytoplasm. It localises to the nucleus. The protein localises to the preautophagosomal structure. It carries out the reaction [protein]-C-terminal L-amino acid-glycyl-phosphatidylethanolamide + H2O = [protein]-C-terminal L-amino acid-glycine + a 1,2-diacyl-sn-glycero-3-phosphoethanolamine. Cysteine protease that is required for autophagy. Plays a key role in cytoplasm to vacuole transport (Cvt) and autophagy by mediating both proteolytic activation and delipidation of atg8. The protease activity is required for proteolytic activation of atg8 by the cleavage of the C-terminal amino acid of atg8 to reveal a C-terminal glycine. Azg8 ubiquitin-like activity requires the exposure of the glycine at the C-terminus for its conjugation to phosphatidylethanolamine (PE) and its insertion to membranes, which is necessary for autophagy. The atg8-PE conjugate mediates tethering between adjacent membranes and stimulates membrane hemifusion, leading to expansion of the autophagosomal membrane during autophagy. In addition to the protease activity, also catalyzes deconjugation of PE-conjugated forms of atg8 during macroautophagy since atg8 delipidation is required to release the protein from membranes, which facilitates multiple events during macroautophagy, and especially for efficient autophagosome biogenesis, the assembly of atg99-containing tubulovesicular clusters into phagophores/autophagosomes, and for the disassembly of PAS-associated ATG components. Atg8 delipidation by atg4 also recycles atg8-PE generated on inappropriate membranes to maintain a reservoir of unlipidated atg8 that is required for autophagosome formation at the PAS. This is Probable cysteine protease atg4 from Aspergillus oryzae (strain ATCC 42149 / RIB 40) (Yellow koji mold).